The sequence spans 330 residues: Polyprenal reductase (330 aa).

Over 1–16 the chain is Cytoplasmic; that stretch reads MAGWAGAELSVLNPLR. The helical transmembrane segment at 17–37 threads the bilayer; sequence ALWLLLAAAFLLALLLQLAPA. Over 38 to 89 the chain is Lumenal; it reads RLLPSCALFQDLIRYGKTKQSGSRRPAVCRAFDVPKRYFSHFYVVSVLWNGS. The helical transmembrane segment at 90–110 threads the bilayer; sequence LLWFLSQSLFLGAPFPSWLWA. Over 111–136 the chain is Cytoplasmic; it reads LLRTLGVTQFQALGMESKASRIQGKK. A helical membrane pass occupies residues 137 to 157; it reads LALSTFLVLVFLWVHSLRRLF. At 158–169 the chain is on the lumenal side; sequence ECFYVSVFSNTA. Residues 170–190 traverse the membrane as a helical segment; that stretch reads IHVVQYCFGLVYYVLVGLTVL. Topologically, residues 191-206 are cytoplasmic; the sequence is SQVPMNDKNVYALGKN. The chain crosses the membrane as a helical span at residues 207-227; that stretch reads LLLQARWFHILGMMMFFWSSA. Over 228 to 277 the chain is Lumenal; sequence HQYKCHVILSNLRRNKKGVVIHCQHRIPFGDWFEYVSSANYLAELMIYIS. Residues 278-298 form a helical membrane-spanning segment; the sequence is MAVTFGLHNVTWWLVVTYVFF. At 299 to 330 the chain is on the cytoplasmic side; sequence SQALSAFFNHRFYKSTFVSYPKHRKAFLPFLF.

The protein belongs to the steroid 5-alpha reductase family. Polyprenal reductase subfamily. As to expression, expressed in the 2 tissues tested i.e. testis and liver.

The protein resides in the endoplasmic reticulum membrane. The enzyme catalyses a di-trans,poly-cis-dolichal + NADP(+) = a di-trans,poly-cis-polyprenal + NADPH + H(+). It catalyses the reaction a 3-oxo-5alpha-steroid + NADP(+) = a 3-oxo-Delta(4)-steroid + NADPH + H(+). The catalysed reaction is androst-4-ene-3,17-dione + NADPH + H(+) = 5alpha-androstan-3,17-dione + NADP(+). It carries out the reaction 17beta-hydroxy-5alpha-androstan-3-one + NADP(+) = testosterone + NADPH + H(+). It functions in the pathway protein modification; protein glycosylation. Functionally, plays a key role in early steps of protein N-linked glycosylation by being involved in the conversion of polyprenol into dolichol. Acts as a polyprenal reductase that mediates the reduction of polyprenal into dolichal in a NADP-dependent mechanism. Dolichols are required for the synthesis of dolichol-linked monosaccharides and the oligosaccharide precursor used for N-glycosylation. Also able to convert testosterone (T) into 5-alpha-dihydrotestosterone (DHT). The sequence is that of Polyprenal reductase from Rattus norvegicus (Rat).